Consider the following 122-residue polypeptide: Large ribosomal subunit protein bL12 (122 aa).

The protein belongs to the bacterial ribosomal protein bL12 family. Homodimer. Part of the ribosomal stalk of the 50S ribosomal subunit. Forms a multimeric L10(L12)X complex, where L10 forms an elongated spine to which 2 to 4 L12 dimers bind in a sequential fashion. Binds GTP-bound translation factors.

Forms part of the ribosomal stalk which helps the ribosome interact with GTP-bound translation factors. Is thus essential for accurate translation. In Vibrio vulnificus (strain CMCP6), this protein is Large ribosomal subunit protein bL12.